The sequence spans 264 residues: MAAEQRKIIEQLMGSNLSNFTSRGLVHFTDRKVCRSFLCGICPHDIFTNTKMDLGPCPKIHSDKLKSDYERASYSHDYGYEWDYLEDLERHVDDCNKRIDIAEARREKTKEEEERIDELMRDIIHTDHSIEVIITEMEALAKRKLVNDAVKHFIELNRLKTYRKELYDEVISMNEIPSQASTTHQKLQVCDICSAYLSRLDNDRRLADHFSGKMHLGYAMLRNIARDLRAQLEDREKSRDKKDGEKQRDNLASFEDKISTSFVA.

Residues 83–126 (DYLEDLERHVDDCNKRIDIAEARREKTKEEEERIDELMRDIIHT) adopt a coiled-coil conformation. The segment covering 233-258 (EDREKSRDKKDGEKQRDNLASFEDKI) has biased composition (basic and acidic residues). Residues 233–264 (EDREKSRDKKDGEKQRDNLASFEDKISTSFVA) are disordered.

This sequence belongs to the Luc7 family. As to quaternary structure, component of the U1 snRNP particle, a subcomplex of the spliceosome.

Its subcellular location is the cytoplasm. It is found in the nucleus. Its function is as follows. Component of the U1 snRNP particle, which recognizes and binds the 5'-splice site of pre-mRNA. Together with other non-snRNP factors, U1 snRNP forms the spliceosomal commitment complex, that targets pre-mRNA to the splicing pathway. The sequence is that of U1 snRNP-associated protein usp106 (usp106) from Schizosaccharomyces pombe (strain 972 / ATCC 24843) (Fission yeast).